The following is a 192-amino-acid chain: UPF0312 protein YE1254 (192 aa).

A signal peptide spans 1-23; that stretch reads MFNKTLLGLTVGALMFTAGSAVA.

Belongs to the UPF0312 family. Type 1 subfamily.

It localises to the periplasm. The sequence is that of UPF0312 protein YE1254 from Yersinia enterocolitica serotype O:8 / biotype 1B (strain NCTC 13174 / 8081).